The chain runs to 374 residues: Putative C-&gt;U-editing enzyme APOBEC-4 (374 aa).

Residues 60-176 enclose the CMP/dCMP-type deaminase domain; that stretch reads PQTKHLTFYE…AWNRKALQSL (117 aa). Residue His92 participates in Zn(2+) binding. The active-site Proton donor is the Glu94. Positions 126 and 133 each coordinate Zn(2+). Residues 259–280 are disordered; it reads EKHPLGSAAPAQRQPTRGQDPR.

This sequence belongs to the cytidine and deoxycytidylate deaminase family. Zn(2+) is required as a cofactor. Predominantly expressed in testis.

Its function is as follows. Putative C to U editing enzyme whose physiological substrate is not yet known. This is Putative C-&gt;U-editing enzyme APOBEC-4 (Apobec4) from Mus musculus (Mouse).